A 338-amino-acid polypeptide reads, in one-letter code: Ketol-acid reductoisomerase (NADP(+)) (338 aa).

A KARI N-terminal Rossmann domain is found at 1–181 (MNVYYDKDCD…GGGRSGIIET (181 aa)). NADP(+)-binding positions include 24–27 (YGSQ), arginine 47, serine 50, serine 52, and 82–85 (DEFQ). Residue histidine 107 is part of the active site. An NADP(+)-binding site is contributed by glycine 133. Residues 182 to 327 (TFKDETETDL…AKLRSMMPWI (146 aa)) form the KARI C-terminal knotted domain. 4 residues coordinate Mg(2+): aspartate 190, glutamate 194, glutamate 226, and glutamate 230. A substrate-binding site is contributed by serine 251.

The protein belongs to the ketol-acid reductoisomerase family. Requires Mg(2+) as cofactor.

It catalyses the reaction (2R)-2,3-dihydroxy-3-methylbutanoate + NADP(+) = (2S)-2-acetolactate + NADPH + H(+). It carries out the reaction (2R,3R)-2,3-dihydroxy-3-methylpentanoate + NADP(+) = (S)-2-ethyl-2-hydroxy-3-oxobutanoate + NADPH + H(+). It functions in the pathway amino-acid biosynthesis; L-isoleucine biosynthesis; L-isoleucine from 2-oxobutanoate: step 2/4. The protein operates within amino-acid biosynthesis; L-valine biosynthesis; L-valine from pyruvate: step 2/4. Involved in the biosynthesis of branched-chain amino acids (BCAA). Catalyzes an alkyl-migration followed by a ketol-acid reduction of (S)-2-acetolactate (S2AL) to yield (R)-2,3-dihydroxy-isovalerate. In the isomerase reaction, S2AL is rearranged via a Mg-dependent methyl migration to produce 3-hydroxy-3-methyl-2-ketobutyrate (HMKB). In the reductase reaction, this 2-ketoacid undergoes a metal-dependent reduction by NADPH to yield (R)-2,3-dihydroxy-isovalerate. The polypeptide is Ketol-acid reductoisomerase (NADP(+)) (Psychrobacter sp. (strain PRwf-1)).